A 497-amino-acid polypeptide reads, in one-letter code: Angiopoietin-1 (497 aa).

An N-terminal signal peptide occupies residues 1 to 15 (MTVFLSFAFLAAILT). N-linked (GlcNAc...) asparagine glycosylation is found at N92, N122, N154, N243, and N294. A coiled-coil region spans residues 153–261 (LNQTSRLEIQ…LELMDTVHNL (109 aa)). In terms of domain architecture, Fibrinogen C-terminal spans 276–496 (KEEEKPFRDC…STTMMIRPLD (221 aa)). 2 disulfide bridges follow: C285-C314 and C438-C451.

In terms of assembly, homooligomer. Interacts with TEK/TIE2. Interacts with SVEP1/polydom. Interacts with THBD; this interaction significantly inhibits the generation of activated PC and TAFIa/CPB2 by the thrombin/thrombomodulin complex.

It localises to the secreted. In terms of biological role, binds and activates TIE2 receptor by inducing its tyrosine phosphorylation. Implicated in endothelial developmental processes later and distinct from that of VEGF. Appears to play a crucial role in mediating reciprocal interactions between the endothelium and surrounding matrix and mesenchyme. Mediates blood vessel maturation/stability. It may play an important role in the heart early development. The protein is Angiopoietin-1 (ANGPT1) of Bos taurus (Bovine).